The primary structure comprises 208 residues: Uridine kinase (208 aa).

Residue 12–19 (GGSGGGKT) coordinates ATP.

This sequence belongs to the uridine kinase family.

Its subcellular location is the cytoplasm. It carries out the reaction uridine + ATP = UMP + ADP + H(+). The catalysed reaction is cytidine + ATP = CMP + ADP + H(+). It functions in the pathway pyrimidine metabolism; CTP biosynthesis via salvage pathway; CTP from cytidine: step 1/3. The protein operates within pyrimidine metabolism; UMP biosynthesis via salvage pathway; UMP from uridine: step 1/1. This chain is Uridine kinase, found in Streptococcus pyogenes serotype M18 (strain MGAS8232).